A 423-amino-acid polypeptide reads, in one-letter code: Putative RING-H2 finger protein ATL49 (423 aa).

Residues Ile-43 to Leu-63 form a helical membrane-spanning segment. Residues Cys-126 to Arg-168 form an RING-type; atypical zinc finger. Disordered stretches follow at residues Asn-213–Gly-236 and His-377–Ser-399. Positions Ile-379–Asn-389 are enriched in basic and acidic residues.

The protein belongs to the RING-type zinc finger family. ATL subfamily.

It is found in the membrane. It catalyses the reaction S-ubiquitinyl-[E2 ubiquitin-conjugating enzyme]-L-cysteine + [acceptor protein]-L-lysine = [E2 ubiquitin-conjugating enzyme]-L-cysteine + N(6)-ubiquitinyl-[acceptor protein]-L-lysine.. It functions in the pathway protein modification; protein ubiquitination. May be involved in female gametophyte development. The polypeptide is Putative RING-H2 finger protein ATL49 (ATL49) (Arabidopsis thaliana (Mouse-ear cress)).